A 209-amino-acid polypeptide reads, in one-letter code: Neurotrophin-4 (209 aa).

An N-terminal signal peptide occupies residues 1–21 (MLPRHSCSLLLFLLLLPSVPM). The propeptide occupies 22 to 79 (EPQPPSSTLPPFLAPEWDLLSPRVALSRGTPAGPPLLFLLEAGAYGEPAGAPANRSRR). Asn-75 carries N-linked (GlcNAc...) asparagine glycosylation. Cystine bridges form between Cys-96–Cys-169, Cys-140–Cys-198, and Cys-157–Cys-200.

It belongs to the NGF-beta family. As to expression, expressed in thymus, muscle, ovary, brain, heart, stomach and kidney. Expressed in both embryo and adult tissues.

The protein resides in the secreted. In terms of biological role, target-derived survival factor for peripheral sensory sympathetic neurons. May promote ameloblast differentiation and subsequent reduction in proliferation of ameloblasts. The sequence is that of Neurotrophin-4 (Ntf4) from Rattus norvegicus (Rat).